The chain runs to 155 residues: Endoribonuclease YbeY (155 aa).

Histidine 115, histidine 119, and histidine 125 together coordinate Zn(2+).

The protein belongs to the endoribonuclease YbeY family. It depends on Zn(2+) as a cofactor.

Its subcellular location is the cytoplasm. In terms of biological role, single strand-specific metallo-endoribonuclease involved in late-stage 70S ribosome quality control and in maturation of the 3' terminus of the 16S rRNA. The sequence is that of Endoribonuclease YbeY from Polynucleobacter asymbioticus (strain DSM 18221 / CIP 109841 / QLW-P1DMWA-1) (Polynucleobacter necessarius subsp. asymbioticus).